The sequence spans 946 residues: Probable leucine-rich repeat receptor-like protein kinase At5g49770 (946 aa).

A signal peptide spans 1-25 (MKMSSRIGLFKLLILLFFQIYSVYA). Over 26-561 (FTDGSDFTAL…LEDSKTVSMK (536 aa)) the chain is Extracellular. LRR repeat units follow at residues 67 to 91 (DNRVVSISLTNRNLKGKLPTEISTL), 92 to 116 (SELQTLDLTGNPELSGPLPANIGNL), 118 to 140 (KLTFLSLMGCAFNGPIPDSIGNL), 141 to 164 (EQLTRLSLNLNKFSGTIPASMGRL), 166 to 191 (KLYWFDIADNQLEGKLPVSDGASLPG), 195 to 219 (LLQTGHFHFGNNKLSGEIPEKLFSS), 221 to 244 (MTLLHVLFDGNQFTGSIPESLGLV), 245 to 268 (QNLTVLRLDRNRLSGDIPSSLNNL), 269 to 293 (TNLQELHLSDNKFTGSLPNLTSLTS), 295 to 314 (YTLDVSNNPLALSPVPSWIP), 316 to 340 (LNSLSTLRLEDIQLDGPVPTSLFSP), 342 to 365 (QLQTVSLKHNLINTTLDLGTNYSK), 367 to 387 (LDFVDLRDNFITGYKSPANNP), and 389 to 407 (NVMLADNQVCQDPANQLSG). Residues asparagine 246, asparagine 267, and asparagine 287 are each glycosylated (N-linked (GlcNAc...) asparagine). Residues asparagine 354 and asparagine 362 are each glycosylated (N-linked (GlcNAc...) asparagine). Residues asparagine 415, asparagine 460, asparagine 489, and asparagine 514 are each glycosylated (N-linked (GlcNAc...) asparagine). Residues 562–582 (VIIGVVVGVVVLLLLLALAGI) form a helical membrane-spanning segment. Residues 583–946 (YALRQKKRAQ…YTGVFPTPKP (364 aa)) lie on the Cytoplasmic side of the membrane. Positions 634-908 (FSDANDVGGG…EVVQELESIL (275 aa)) constitute a Protein kinase domain. ATP-binding positions include 640-648 (VGGGGYGQV) and lysine 662. Aspartate 758 acts as the Proton acceptor in catalysis. The disordered stretch occupies residues 919-946 (SATYEEASGDPYGRDSFEYTGVFPTPKP).

Belongs to the protein kinase superfamily. Ser/Thr protein kinase family.

Its subcellular location is the membrane. It catalyses the reaction L-seryl-[protein] + ATP = O-phospho-L-seryl-[protein] + ADP + H(+). The enzyme catalyses L-threonyl-[protein] + ATP = O-phospho-L-threonyl-[protein] + ADP + H(+). In Arabidopsis thaliana (Mouse-ear cress), this protein is Probable leucine-rich repeat receptor-like protein kinase At5g49770.